The sequence spans 230 residues: Ribonuclease 3 (230 aa).

One can recognise an RNase III domain in the interval 5–127 (HEHLARKLGI…ILGAVLRDQG (123 aa)). Glu40 lines the Mg(2+) pocket. Asp44 is a catalytic residue. The Mg(2+) site is built by Asp113 and Glu116. Glu116 is a catalytic residue. Residues 154 to 224 (DPKTRLQELM…AENMLSRLSD (71 aa)) enclose the DRBM domain. The disordered stretch occupies residues 202 to 230 (GEGSSRKKAEQQAAENMLSRLSDQSRFRV).

The protein belongs to the ribonuclease III family. In terms of assembly, homodimer. Mg(2+) serves as cofactor.

The protein localises to the cytoplasm. The enzyme catalyses Endonucleolytic cleavage to 5'-phosphomonoester.. In terms of biological role, digests double-stranded RNA. Involved in the processing of primary rRNA transcript to yield the immediate precursors to the large and small rRNAs (23S and 16S). Processes some mRNAs, and tRNAs when they are encoded in the rRNA operon. Processes pre-crRNA and tracrRNA of type II CRISPR loci if present in the organism. In Methylococcus capsulatus (strain ATCC 33009 / NCIMB 11132 / Bath), this protein is Ribonuclease 3.